The following is a 544-amino-acid chain: Methionine--tRNA ligase (544 aa).

Positions 10-20 (PYANGSLHLGH) match the 'HIGH' region motif. Positions 141, 144, 153, and 156 each coordinate Zn(2+). The 'KMSKS' region motif lies at 329–333 (KLSTS). ATP is bound at residue T332.

It belongs to the class-I aminoacyl-tRNA synthetase family. MetG type 1 subfamily. In terms of assembly, monomer. The cofactor is Zn(2+).

It is found in the cytoplasm. It catalyses the reaction tRNA(Met) + L-methionine + ATP = L-methionyl-tRNA(Met) + AMP + diphosphate. Its function is as follows. Is required not only for elongation of protein synthesis but also for the initiation of all mRNA translation through initiator tRNA(fMet) aminoacylation. The polypeptide is Methionine--tRNA ligase (Bacillus cereus (strain AH187)).